A 308-amino-acid polypeptide reads, in one-letter code: Ribosomal RNA large subunit methyltransferase F (308 aa).

This sequence belongs to the methyltransferase superfamily. METTL16/RlmF family.

It localises to the cytoplasm. The catalysed reaction is adenosine(1618) in 23S rRNA + S-adenosyl-L-methionine = N(6)-methyladenosine(1618) in 23S rRNA + S-adenosyl-L-homocysteine + H(+). In terms of biological role, specifically methylates the adenine in position 1618 of 23S rRNA. This chain is Ribosomal RNA large subunit methyltransferase F, found in Shigella boydii serotype 18 (strain CDC 3083-94 / BS512).